Here is a 341-residue protein sequence, read N- to C-terminus: LIM and senescent cell antigen-like-containing domain protein 2 (341 aa).

LIM zinc-binding domains lie at 13-74 (AVCQ…LFAP), 76-133 (CGSC…EKAK), 138-195 (YICQ…KMGV), 196-255 (PICG…LFGD), and 256-315 (VCYN…FPLE). Position 22 is a phosphoserine (Phe22). A Phosphothreonine modification is found at Thr327. Ser328 carries the phosphoserine modification.

In terms of assembly, interacts with TGFB1I1. Interacts with integrin-linked protein kinase 1 (ILK) via the first LIM domain, and in competition with LIMS1. Part of the heterotrimeric IPP complex composed of integrin-linked kinase (ILK), LIMS1 or LIMS2, and PARVA.

The protein resides in the nucleus. The protein localises to the cell junction. It is found in the focal adhesion. Its subcellular location is the cell membrane. Functionally, adapter protein in a cytoplasmic complex linking beta-integrins to the actin cytoskeleton, bridges the complex to cell surface receptor tyrosine kinases and growth factor receptors. Plays a role in modulating cell spreading and migration. This chain is LIM and senescent cell antigen-like-containing domain protein 2 (LIMS2), found in Homo sapiens (Human).